The chain runs to 423 residues: 26S proteasome regulatory subunit 6B homolog (423 aa).

207 to 214 (GPPGTGKT) serves as a coordination point for ATP.

Belongs to the AAA ATPase family.

The protein localises to the cytoplasm. The protein resides in the nucleus. Its function is as follows. The 26S proteasome is involved in the ATP-dependent degradation of ubiquitinated proteins. The regulatory (or ATPase) complex confers ATP dependency and substrate specificity to the 26S complex. This Aspergillus niger protein is 26S proteasome regulatory subunit 6B homolog (tbpA).